The chain runs to 457 residues: Cysteine--tRNA ligase (457 aa).

Residue C30 participates in Zn(2+) binding. A 'HIGH' region motif is present at residues 32–42; the sequence is PTVYDRAHLGN. 3 residues coordinate Zn(2+): C213, H238, and E242. Positions 271–275 match the 'KMSKS' region motif; sequence KMSKS. K274 contacts ATP.

Belongs to the class-I aminoacyl-tRNA synthetase family. As to quaternary structure, monomer. Requires Zn(2+) as cofactor.

The protein localises to the cytoplasm. The catalysed reaction is tRNA(Cys) + L-cysteine + ATP = L-cysteinyl-tRNA(Cys) + AMP + diphosphate. The chain is Cysteine--tRNA ligase from Ruegeria sp. (strain TM1040) (Silicibacter sp.).